Consider the following 336-residue polypeptide: Meiotic drive suppressor wtf23 (336 aa).

Disordered regions lie at residues 1–21 (MKNNYTSLKSPIDEEDELKTG) and 35–68 (DSEEEGALPPYSDHARVSNPPNTHRENHSSGTTD). 7 helical membrane passes run 73–93 (FLIKLLISFTPIVLLNALAVW), 110–130 (WTLFGFWCLVCTLVLIILTYF), 140–160 (VTVIFLAQCIKVTAVFLAQCV), 169–189 (EMMIIIWILWLIICCILFGCV), 206–226 (TISAVLFLIVSSVCIPIWTLW), 228–248 (ALSGMLQVLGIHGIIAVLVNG), and 261–281 (GYEIEGFVLFFTSNALFLYEM).

Belongs to the WTF family. As to quaternary structure, homomer. Interacts with other proteins that exhibit high sequence similarity.

It is found in the spore membrane. Its subcellular location is the vacuole membrane. In terms of biological role, acts as a suppressor component of the dual wtf meiotic drive system, and can suppress but not confer meiotic drive by compatible poisons. Wtf meiotic drive systems promote unequal transmission of alleles from the parental zygote to progeny spores by encoding a poison and an antidote from the same locus; the poison is trans-acting and forms toxic aggregates in all spores within an ascus, wherease the antidote is spore-specific and targets aggregates for degradation by the vacuole. Meiotic drive by wtf systems therefore lead to poisoning of all progeny that do not inherit the dual poison/antidote allele, or express a compatible antidote. This Schizosaccharomyces kambucha (Fission yeast) protein is Meiotic drive suppressor wtf23.